Consider the following 186-residue polypeptide: Ribulose bisphosphate carboxylase small subunit, chloroplastic 6 (186 aa).

Residues Met1–Gln60 constitute a chloroplast transit peptide.

This sequence belongs to the RuBisCO small chain family. In terms of assembly, heterohexadecamer of 8 large and 8 small subunits.

The protein resides in the plastid. The protein localises to the chloroplast. Its function is as follows. RuBisCO catalyzes two reactions: the carboxylation of D-ribulose 1,5-bisphosphate, the primary event in carbon dioxide fixation, as well as the oxidative fragmentation of the pentose substrate. Both reactions occur simultaneously and in competition at the same active site. Although the small subunit is not catalytic it is essential for maximal activity. The protein is Ribulose bisphosphate carboxylase small subunit, chloroplastic 6 of Mesembryanthemum crystallinum (Common ice plant).